The primary structure comprises 842 residues: Elongation factor 2 (842 aa).

The tr-type G domain occupies T17 to V346. GTP is bound by residues A26–S33, N158–D161, and S213–L215. A Diphthamide modification is found at H699.

Belongs to the TRAFAC class translation factor GTPase superfamily. Classic translation factor GTPase family. EF-G/EF-2 subfamily.

The protein resides in the cytoplasm. It carries out the reaction GTP + H2O = GDP + phosphate + H(+). Functionally, catalyzes the GTP-dependent ribosomal translocation step during translation elongation. During this step, the ribosome changes from the pre-translocational (PRE) to the post-translocational (POST) state as the newly formed A-site-bound peptidyl-tRNA and P-site-bound deacylated tRNA move to the P and E sites, respectively. Catalyzes the coordinated movement of the two tRNA molecules, the mRNA and conformational changes in the ribosome. The protein is Elongation factor 2 (EFT2) of Candida albicans (strain SC5314 / ATCC MYA-2876) (Yeast).